A 203-amino-acid chain; its full sequence is N-(5'-phosphoribosyl)anthranilate isomerase (203 aa).

This sequence belongs to the TrpF family.

It carries out the reaction N-(5-phospho-beta-D-ribosyl)anthranilate = 1-(2-carboxyphenylamino)-1-deoxy-D-ribulose 5-phosphate. Its pathway is amino-acid biosynthesis; L-tryptophan biosynthesis; L-tryptophan from chorismate: step 3/5. This is N-(5'-phosphoribosyl)anthranilate isomerase from Thermoanaerobacter pseudethanolicus (strain ATCC 33223 / 39E) (Clostridium thermohydrosulfuricum).